The sequence spans 428 residues: Enolase (428 aa).

Position 162 (Gln162) interacts with (2R)-2-phosphoglycerate. The active-site Proton donor is Glu204. The Mg(2+) site is built by Asp241, Glu283, and Asp310. The (2R)-2-phosphoglycerate site is built by Lys335, Arg364, Ser365, and Lys386. The active-site Proton acceptor is Lys335.

The protein belongs to the enolase family. Mg(2+) is required as a cofactor.

Its subcellular location is the cytoplasm. The protein resides in the secreted. The protein localises to the cell surface. It carries out the reaction (2R)-2-phosphoglycerate = phosphoenolpyruvate + H2O. It participates in carbohydrate degradation; glycolysis; pyruvate from D-glyceraldehyde 3-phosphate: step 4/5. Its function is as follows. Catalyzes the reversible conversion of 2-phosphoglycerate (2-PG) into phosphoenolpyruvate (PEP). It is essential for the degradation of carbohydrates via glycolysis. In Rhodococcus erythropolis (strain PR4 / NBRC 100887), this protein is Enolase.